The primary structure comprises 317 residues: Melanoma-associated antigen 4 (317 aa).

Residues 1-14 (MSSEQKSQHCKPEE) show a composition bias toward basic and acidic residues. A disordered region spans residues 1–102 (MSSEQKSQHC…EEGPSTSPDA (102 aa)). Residues 66–82 (PQGASALPTTISFTCWR) are compositionally biased toward polar residues. The MAGE domain maps to 110–309 (LSNKVDELAH…IAYPSLREAA (200 aa)).

In terms of tissue distribution, expressed in many tumors of several types, such as melanoma, head and neck squamous cell carcinoma, lung carcinoma and breast carcinoma, but not in normal tissues except for testes and placenta.

In terms of biological role, regulates cell proliferation through the inhibition of cell cycle arrest at the G1 phase. Also negatively regulates p53-mediated apoptosis. This Homo sapiens (Human) protein is Melanoma-associated antigen 4 (MAGEA4).